We begin with the raw amino-acid sequence, 503 residues long: Cysteine desulfurase, mitochondrial (503 aa).

A mitochondrion-targeting transit peptide spans 1-27; sequence MSNIAPQVLRHASRACSRRLSLSASLV. Residues 34 to 50 are compositionally biased toward low complexity; that stretch reads RTVTGSGSGGRRYVSGS. Residues 34–58 are disordered; the sequence is RTVTGSGSGGRRYVSGSQRHNAQAQ. Residues 172–173, Asn-254, Gln-282, and 302–304 contribute to the pyridoxal 5'-phosphate site; these read AT and SGH. Lys-305 carries the N6-(pyridoxal phosphate)lysine modification. Thr-342 is a pyridoxal 5'-phosphate binding site. Cys-427 (cysteine persulfide intermediate) is an active-site residue. Residue Cys-427 participates in [2Fe-2S] cluster binding.

The protein belongs to the class-V pyridoxal-phosphate-dependent aminotransferase family. NifS/IscS subfamily. Requires pyridoxal 5'-phosphate as cofactor.

It is found in the mitochondrion. The catalysed reaction is (sulfur carrier)-H + L-cysteine = (sulfur carrier)-SH + L-alanine. In terms of biological role, catalyzes the removal of elemental sulfur from cysteine to produce alanine. It supplies the inorganic sulfur for iron-sulfur (Fe-S) clusters. Plays a role in both tRNA-processing and mitochondrial metabolism. Involved in the 2-thio-modification of both 5-carboxymethylaminomethyl-2-thiouridine in mitochondrial tRNAs and 5-methoxycarbonylmethyl-2-thiouridine (mcm5s2U) in cytoplasmic tRNAs. This is Cysteine desulfurase, mitochondrial from Arthroderma benhamiae (strain ATCC MYA-4681 / CBS 112371) (Trichophyton mentagrophytes).